Reading from the N-terminus, the 153-residue chain is Myoglobin (153 aa).

The region spanning Met1 to Lys147 is the Globin domain. His94 contacts heme b.

It belongs to the globin family. As to quaternary structure, homodimer; disulfide-linked. The N-terminus is blocked. In terms of tissue distribution, body wall globin is localized in cellular compartments belonging to the hypodermis, the dorsal, ventral and lateral cords, the nerve ring, and body wall muscle.

It localises to the cytoplasm. Functionally, high oxygen affinity. Probably supplies oxygen needed for muscle activity. This is Myoglobin from Ascaris suum (Pig roundworm).